The primary structure comprises 156 residues: Small ribosomal subunit protein uS7 (156 aa).

Belongs to the universal ribosomal protein uS7 family. In terms of assembly, part of the 30S ribosomal subunit. Contacts proteins S9 and S11.

Its function is as follows. One of the primary rRNA binding proteins, it binds directly to 16S rRNA where it nucleates assembly of the head domain of the 30S subunit. Is located at the subunit interface close to the decoding center, probably blocks exit of the E-site tRNA. The protein is Small ribosomal subunit protein uS7 of Rhodococcus erythropolis (strain PR4 / NBRC 100887).